A 186-amino-acid chain; its full sequence is Peptidyl-tRNA hydrolase (186 aa).

Residue Tyr-14 coordinates tRNA. The active-site Proton acceptor is His-19. Positions 64, 66, and 112 each coordinate tRNA.

The protein belongs to the PTH family. As to quaternary structure, monomer.

The protein localises to the cytoplasm. The enzyme catalyses an N-acyl-L-alpha-aminoacyl-tRNA + H2O = an N-acyl-L-amino acid + a tRNA + H(+). In terms of biological role, hydrolyzes ribosome-free peptidyl-tRNAs (with 1 or more amino acids incorporated), which drop off the ribosome during protein synthesis, or as a result of ribosome stalling. Functionally, catalyzes the release of premature peptidyl moieties from peptidyl-tRNA molecules trapped in stalled 50S ribosomal subunits, and thus maintains levels of free tRNAs and 50S ribosomes. The polypeptide is Peptidyl-tRNA hydrolase (Geobacillus thermodenitrificans (strain NG80-2)).